Here is a 314-residue protein sequence, read N- to C-terminus: MLDFEKPLFEIRNKIESLKESQDKNDVDLQEEIDMLEASLERETKKIYTNLKPWDRVQIARLQERPTTLDYIPYIFDSFMELHGDRNFRDDPAMIGGIGFLNGRAVTVIGQQRGKDTKDNIYRNFGMAHPEGYRKALRLMKQAEKFNRPIFTFIDTKGAYPGKAAEERGQSESIATNLIEMASLKVPVIAIVIGEGGSGGALGIGIANKVLMLENSTYSVISPEGAAALLWKDSNLAKIAAETMKITAHDIKQLGIIDDVISEPLGGAHKDIEQQALAIKSAFVAQLDSLESLSRDEIANDRFEKFRNIGSYIE.

The CoA carboxyltransferase C-terminal domain maps to 32 to 289; the sequence is EIDMLEASLE…KSAFVAQLDS (258 aa).

The protein belongs to the AccA family. Acetyl-CoA carboxylase is a heterohexamer composed of biotin carboxyl carrier protein (AccB), biotin carboxylase (AccC) and two subunits each of ACCase subunit alpha (AccA) and ACCase subunit beta (AccD).

Its subcellular location is the cytoplasm. It carries out the reaction N(6)-carboxybiotinyl-L-lysyl-[protein] + acetyl-CoA = N(6)-biotinyl-L-lysyl-[protein] + malonyl-CoA. It participates in lipid metabolism; malonyl-CoA biosynthesis; malonyl-CoA from acetyl-CoA: step 1/1. In terms of biological role, component of the acetyl coenzyme A carboxylase (ACC) complex. First, biotin carboxylase catalyzes the carboxylation of biotin on its carrier protein (BCCP) and then the CO(2) group is transferred by the carboxyltransferase to acetyl-CoA to form malonyl-CoA. The chain is Acetyl-coenzyme A carboxylase carboxyl transferase subunit alpha from Staphylococcus aureus (strain NCTC 8325 / PS 47).